The primary structure comprises 123 residues: UPF0342 protein LAR_1202 (123 aa).

Belongs to the UPF0342 family.

The polypeptide is UPF0342 protein LAR_1202 (Limosilactobacillus reuteri subsp. reuteri (strain JCM 1112) (Lactobacillus reuteri)).